The primary structure comprises 110 residues: DNA-binding protein Tneu_1679 (110 aa).

The protein belongs to the PDCD5 family.

This Pyrobaculum neutrophilum (strain DSM 2338 / JCM 9278 / NBRC 100436 / V24Sta) (Thermoproteus neutrophilus) protein is DNA-binding protein Tneu_1679.